A 305-amino-acid polypeptide reads, in one-letter code: Glycine--tRNA ligase alpha subunit (305 aa).

Belongs to the class-II aminoacyl-tRNA synthetase family. In terms of assembly, tetramer of two alpha and two beta subunits.

It is found in the cytoplasm. The enzyme catalyses tRNA(Gly) + glycine + ATP = glycyl-tRNA(Gly) + AMP + diphosphate. This Vibrio campbellii (strain ATCC BAA-1116) protein is Glycine--tRNA ligase alpha subunit.